The chain runs to 564 residues: Arginine--tRNA ligase (564 aa).

A 'HIGH' region motif is present at residues 136-146 (ANPTGPLHMGN).

This sequence belongs to the class-I aminoacyl-tRNA synthetase family. As to quaternary structure, monomer.

The protein resides in the cytoplasm. It carries out the reaction tRNA(Arg) + L-arginine + ATP = L-arginyl-tRNA(Arg) + AMP + diphosphate. This chain is Arginine--tRNA ligase, found in Ruminiclostridium cellulolyticum (strain ATCC 35319 / DSM 5812 / JCM 6584 / H10) (Clostridium cellulolyticum).